Reading from the N-terminus, the 127-residue chain is Protein FAM229A (127 aa).

Positions 1–96 are disordered; it reads MLPSSTPGPG…ATEHNPVRPL (96 aa). The segment covering 24-39 has biased composition (low complexity); sequence RSPAARAPAAASSLGP.

The protein belongs to the FAM229 family.

The protein is Protein FAM229A (FAM229A) of Homo sapiens (Human).